The chain runs to 292 residues: Acetylglutamate kinase (292 aa).

Substrate is bound by residues 64–65 (GG), Arg-86, and Asn-190.

It belongs to the acetylglutamate kinase family. ArgB subfamily.

It localises to the cytoplasm. The enzyme catalyses N-acetyl-L-glutamate + ATP = N-acetyl-L-glutamyl 5-phosphate + ADP. The protein operates within amino-acid biosynthesis; L-arginine biosynthesis; N(2)-acetyl-L-ornithine from L-glutamate: step 2/4. Its function is as follows. Catalyzes the ATP-dependent phosphorylation of N-acetyl-L-glutamate. The chain is Acetylglutamate kinase from Geobacter metallireducens (strain ATCC 53774 / DSM 7210 / GS-15).